The following is a 190-amino-acid chain: Tegument antigen (190 aa).

EF-hand domains are found at residues Ser-8 to Asp-43 and Ile-51 to Glu-77. Ca(2+) contacts are provided by Asp-55, Asp-57, Asp-59, Lys-61, and Glu-66.

In terms of tissue distribution, adult and schistosomula tegument.

This is Tegument antigen from Schistosoma mansoni (Blood fluke).